The following is a 34-amino-acid chain: GRCVCRKQLLCSYRERRIGDCKIRGVRFPFCCPR.

3 disulfide bridges follow: Cys3–Cys32, Cys5–Cys21, and Cys11–Cys31.

The protein belongs to the alpha-defensin family.

The protein localises to the secreted. Functionally, microbicidal activity and inhibits corticotropin (ACTH) stimulated corticosterone production. The sequence is that of Corticostatin-2 from Oryctolagus cuniculus (Rabbit).